The following is a 453-amino-acid chain: Gamma-glutamylpolyamine synthetase GlnA2 (453 aa).

Residues 15–100 enclose the GS beta-grasp domain; it reads RDIRFVRLWF…MFCDILMPDG (86 aa). In terms of domain architecture, GS catalytic spans 107-453; sequence PRYVLKRALA…FELRKSLPVL (347 aa). Mg(2+)-binding residues include glutamate 130 and glutamate 132. Glutamate 182 serves as a coordination point for ATP. Mg(2+) contacts are provided by glutamate 187 and glutamate 194. Position 239 (glycine 239) interacts with L-glutamate. Position 243 (histidine 243) interacts with Mg(2+). An ATP-binding site is contributed by 245-247; the sequence is HLS. L-glutamate is bound by residues arginine 296, glutamate 310, and arginine 322. The ATP site is built by arginine 322 and arginine 327. Residue glutamate 342 participates in Mg(2+) binding. Arginine 344 serves as a coordination point for L-glutamate.

This sequence belongs to the glutamine synthetase family. Requires Mg(2+) as cofactor.

It carries out the reaction putrescine + L-glutamate + ATP = gamma-L-glutamylputrescine + ADP + phosphate + H(+). It catalyses the reaction spermine + L-glutamate + ATP = gamma-L-glutamylspermine + ADP + phosphate + H(+). The catalysed reaction is spermidine + L-glutamate + ATP = gamma-L-glutamylspermidine + ADP + phosphate + H(+). The enzyme catalyses cadaverine + L-glutamate + ATP = gamma-L-glutamylcadaverine + ADP + phosphate + H(+). Its pathway is amine and polyamine degradation; putrescine degradation. It functions in the pathway amine and polyamine degradation; spermidine degradation. The protein operates within amine and polyamine degradation; spermine degradation. Its activity is regulated as follows. No effect on activity with glutamine synthetase (GS) inhibitor methionine sulfoximine (MSO). Involved in the catabolism of polyamines. Catalyzes the ATP-dependent gamma-glutamylation of polyamines. Substrates include putrescine, cadaverine, spermidine and spermine, with a preference for short-chain polyamine putrescine. No complementation of the L-glutamine auxotrophy of an E.coli glnA mutant. Together with GlnA3, enables survival of S.coelicolor under exposure to high local environmental polyamine concentrations, which is toxic to the cells. In Streptomyces coelicolor (strain ATCC BAA-471 / A3(2) / M145), this protein is Gamma-glutamylpolyamine synthetase GlnA2.